Consider the following 108-residue polypeptide: uncharacterized protein (108 aa).

The HTH hxlR-type domain maps to 7–106 (CPRFEKAVDI…WATEWIDPSF (100 aa)).

This is an uncharacterized protein from Bacillus subtilis (strain 168).